The sequence spans 305 residues: Homoserine kinase (305 aa).

95-105 (PHGRGLGSSSA) contributes to the ATP binding site.

It belongs to the GHMP kinase family. Homoserine kinase subfamily.

It localises to the cytoplasm. It carries out the reaction L-homoserine + ATP = O-phospho-L-homoserine + ADP + H(+). Its pathway is amino-acid biosynthesis; L-threonine biosynthesis; L-threonine from L-aspartate: step 4/5. Functionally, catalyzes the ATP-dependent phosphorylation of L-homoserine to L-homoserine phosphate. This is Homoserine kinase from Streptomyces avermitilis (strain ATCC 31267 / DSM 46492 / JCM 5070 / NBRC 14893 / NCIMB 12804 / NRRL 8165 / MA-4680).